Here is a 233-residue protein sequence, read N- to C-terminus: Synaptogyrin-4 (233 aa).

The MARVEL domain occupies 18-169; the sequence is FLRRPKSISR…QAYLAFQDLR (152 aa). The next 4 helical transmembrane spans lie at 25-45, 66-86, 104-124, and 145-165; these read ISRI…LTDG, CSFA…FLAI, LLDF…FCFL, and AAIA…YLAF. Residues 191–233 form a disordered region; the sequence is SPSSTSPSNPPITGPNSLSYTSSALSPYMTTPKAPRLAMMPDS. Positions 204-219 are enriched in polar residues; it reads GPNSLSYTSSALSPYM.

This sequence belongs to the synaptogyrin family.

It is found in the membrane. The sequence is that of Synaptogyrin-4 (Syngr4) from Mus musculus (Mouse).